A 141-amino-acid polypeptide reads, in one-letter code: Putative ankyrin repeat protein FPV223 (141 aa).

4 ANK repeats span residues 21-50 (SGRT…DVFK), 54-83 (CMCT…YIVK), 85-114 (RNKL…NENS), and 118-140 (DGLT…MFVI).

This chain is Putative ankyrin repeat protein FPV223, found in Vertebrata (FPV).